The sequence spans 157 residues: Large ribosomal subunit protein bL17 (157 aa).

Residues 124–157 are disordered; that stretch reads AAPVVSKQDRAKRVKGSKKAESRSQENEGGDAAE.

The protein belongs to the bacterial ribosomal protein bL17 family. Part of the 50S ribosomal subunit. Contacts protein L32.

The sequence is that of Large ribosomal subunit protein bL17 from Chlorobaculum tepidum (strain ATCC 49652 / DSM 12025 / NBRC 103806 / TLS) (Chlorobium tepidum).